We begin with the raw amino-acid sequence, 954 residues long: Glycine dehydrogenase (decarboxylating) (954 aa).

Polar residues predominate over residues 1–13 (MTELLQSLSTQNE). A disordered region spans residues 1–24 (MTELLQSLSTQNEFVARHNGPNKS). Position 704 is an N6-(pyridoxal phosphate)lysine (K704).

The protein belongs to the GcvP family. As to quaternary structure, the glycine cleavage system is composed of four proteins: P, T, L and H. Pyridoxal 5'-phosphate is required as a cofactor.

The catalysed reaction is N(6)-[(R)-lipoyl]-L-lysyl-[glycine-cleavage complex H protein] + glycine + H(+) = N(6)-[(R)-S(8)-aminomethyldihydrolipoyl]-L-lysyl-[glycine-cleavage complex H protein] + CO2. Its function is as follows. The glycine cleavage system catalyzes the degradation of glycine. The P protein binds the alpha-amino group of glycine through its pyridoxal phosphate cofactor; CO(2) is released and the remaining methylamine moiety is then transferred to the lipoamide cofactor of the H protein. In Vibrio campbellii (strain ATCC BAA-1116), this protein is Glycine dehydrogenase (decarboxylating).